The following is a 151-amino-acid chain: Small ribosomal subunit protein eS6 (151 aa).

This sequence belongs to the eukaryotic ribosomal protein eS6 family.

The protein is Small ribosomal subunit protein eS6 of Pyrobaculum calidifontis (strain DSM 21063 / JCM 11548 / VA1).